Here is a 426-residue protein sequence, read N- to C-terminus: Serine--tRNA ligase (426 aa).

The segment covering 41-60 has biased composition (polar residues); that stretch reads QTRTEQLQAERNARSKSIGQ. Residues 41–64 are disordered; sequence QTRTEQLQAERNARSKSIGQAKQR. Residue 233–235 coordinates L-serine; that stretch reads TAE. Residue 264-266 coordinates ATP; sequence RSE. Glutamate 287 contacts L-serine. 351 to 354 contributes to the ATP binding site; it reads EISS. Residue serine 387 participates in L-serine binding.

The protein belongs to the class-II aminoacyl-tRNA synthetase family. Type-1 seryl-tRNA synthetase subfamily. In terms of assembly, homodimer. The tRNA molecule binds across the dimer.

The protein localises to the cytoplasm. The catalysed reaction is tRNA(Ser) + L-serine + ATP = L-seryl-tRNA(Ser) + AMP + diphosphate + H(+). It carries out the reaction tRNA(Sec) + L-serine + ATP = L-seryl-tRNA(Sec) + AMP + diphosphate + H(+). Its pathway is aminoacyl-tRNA biosynthesis; selenocysteinyl-tRNA(Sec) biosynthesis; L-seryl-tRNA(Sec) from L-serine and tRNA(Sec): step 1/1. Functionally, catalyzes the attachment of serine to tRNA(Ser). Is also able to aminoacylate tRNA(Sec) with serine, to form the misacylated tRNA L-seryl-tRNA(Sec), which will be further converted into selenocysteinyl-tRNA(Sec). In Pseudomonas fluorescens (strain ATCC BAA-477 / NRRL B-23932 / Pf-5), this protein is Serine--tRNA ligase.